Consider the following 56-residue polypeptide: Large ribosomal subunit protein bL32 (56 aa).

Residues M1–A26 form a disordered region.

It belongs to the bacterial ribosomal protein bL32 family.

This is Large ribosomal subunit protein bL32 from Erwinia tasmaniensis (strain DSM 17950 / CFBP 7177 / CIP 109463 / NCPPB 4357 / Et1/99).